The chain runs to 796 residues: Bud site selection protein 27 (796 aa).

Residues 81–121 are a coiled coil; it reads KEEAITFVDDKLKLMEDAIEQFNLKIEEAKKTLDNLNHMED. The segment covering 152–168 has biased composition (polar residues); sequence VISSSVTPTTKQPSQSN. 5 disordered regions span residues 152 to 197, 300 to 344, 421 to 458, 535 to 624, and 752 to 796; these read VISS…EENL, LRAQ…QVGF, EGEASRSNRRTRVSRFRKDRASKKENTLSTFKQETTRS, EKEP…AKTG, and ATAS…DSKP. Composition is skewed to basic and acidic residues over residues 169-197 and 306-318; these read SKKEQTPAVGPKEKGLAKEKKSKSFEENL and SQDHEREEGDVNK. The span at 427–441 shows a compositional bias: basic residues; sequence SNRRTRVSRFRKDRA. Residues 535–550 show a composition bias toward basic and acidic residues; the sequence is EKEPEINSKSEFETPF. Residues 551–568 are compositionally biased toward basic residues; that stretch reads KKKKLKSLQKPRSSKSMK. A compositionally biased stretch (acidic residues) spans 579–589; it reads ISDDDYDDDDD. Ser-580 is subject to Phosphoserine. The span at 601-610 shows a compositional bias: basic and acidic residues; that stretch reads NNTDEQDKFP.

The protein belongs to the prefoldin subunit alpha family.

The protein localises to the cytoplasm. Involved in gene expression controlled by TOR kinase and nutrient signaling. May also be involved in positioning the proximal bud pole signal. The protein is Bud site selection protein 27 (BUD27) of Saccharomyces cerevisiae (strain ATCC 204508 / S288c) (Baker's yeast).